Consider the following 394-residue polypeptide: Probable malate--CoA ligase subunit beta (394 aa).

Residues 9 to 244 form the ATP-grasp domain; the sequence is KELLARHGVH…KSQEDPRETF (236 aa). ATP is bound by residues lysine 46, glutamate 99, valine 102, and glutamate 107. Mg(2+)-binding residues include asparagine 199 and aspartate 213.

Belongs to the succinate/malate CoA ligase beta subunit family. In terms of assembly, heterotetramer of two alpha and two beta subunits. It depends on Mg(2+) as a cofactor.

The enzyme catalyses (S)-malate + ATP + CoA = (S)-malyl-CoA + ADP + phosphate. Its pathway is one-carbon metabolism; formaldehyde assimilation via serine pathway. In Mesorhizobium japonicum (strain LMG 29417 / CECT 9101 / MAFF 303099) (Mesorhizobium loti (strain MAFF 303099)), this protein is Probable malate--CoA ligase subunit beta (mtkA).